Consider the following 493-residue polypeptide: Probable polyol transporter 6 (493 aa).

The next 12 membrane-spanning stretches (helical) occupy residues 25 to 45 (SIVSIIFGYDTGVMSGAMVFI), 54 to 74 (VQIEVLTGILNLCALVGSLLA), 85 to 105 (YTIVLASILFMLGSILMGWGP), 116 to 136 (TAGLGVGFALMVAPVYSAEIA), 142 to 162 (GLLASLPHLCISIGILLGYIV), 177 to 197 (LMLGIAAVPSLVLAFGILKMP), 275 to 295 (VLLTALGIHFFQHASGIEAVL), 313 to 333 (LFLVTIGVGIMKTTFIFTATL), 343 to 363 (LLLTSVGGMVIALTMLGFGLT), 372 to 392 (LAWALVLSIVAAYSFVAFFSI), 414 to 434 (GASLGVAVNRVMNATVSMSFL), and 444 to 464 (GAFFMFAGVAAVAWNFFFFLL).

This sequence belongs to the major facilitator superfamily. Sugar transporter (TC 2.A.1.1) family.

Its subcellular location is the membrane. Functionally, plasma membrane sugar-proton symporter. The sequence is that of Probable polyol transporter 6 (PLT6) from Arabidopsis thaliana (Mouse-ear cress).